The following is an 870-amino-acid chain: Probable inorganic carbon transporter subunit DabA (870 aa).

Zn(2+) contacts are provided by cysteine 381, aspartate 383, histidine 564, and cysteine 579.

It belongs to the inorganic carbon transporter (TC 9.A.2) DabA family. As to quaternary structure, forms a complex with DabB. Requires Zn(2+) as cofactor.

The protein resides in the cell membrane. Its function is as follows. Part of an energy-coupled inorganic carbon pump. The sequence is that of Probable inorganic carbon transporter subunit DabA from Geobacillus kaustophilus (strain HTA426).